The following is an 830-amino-acid chain: Probable mixed-linked glucan synthase 7 (830 aa).

The next 2 helical transmembrane spans lie at 61 to 81 (LTIF…ITYA) and 98 to 118 (AATF…MWVL). The active site involves Asp-186. Residues 251 to 279 (ELVRDRRRVRREYEEMRLRIDALQAADAR) adopt a coiled-coil conformation. Substrate-binding residues include Asp-367 and Asp-369. Residue Asp-529 is part of the active site. A run of 6 helical transmembrane segments spans residues 613 to 633 (LFLM…GGGW), 638 to 658 (TPTY…VAVL), 676 to 696 (FWMV…ALKV), 735 to 755 (ALMA…AAAG), 776 to 796 (LPVA…LGLM), and 805 to 825 (PILF…CLLL).

Belongs to the glycosyltransferase 2 family. Plant cellulose synthase-like F subfamily. As to expression, expressed in mature pollen.

The protein resides in the golgi apparatus membrane. Functionally, may catalyze both beta-1,3 and beta-1,4 glycosidic linkage on beta-D-glucan. Essential for (1,3;1,4)-beta-D-glucans synthesis in grasses and cereals (Poaceae). The mixed-linked glucans (which are not present in walls of dicotyledons or most other monocotyledonous plants) are particularly important constituents of the walls of the starchy endosperm and aleurone cells of cereal grains such as oats, wheat, rice and barley. They can account for up to 70% by weight of the wall. The sequence is that of Probable mixed-linked glucan synthase 7 (CSLF7) from Oryza sativa subsp. japonica (Rice).